The following is a 515-amino-acid chain: Cytochrome P450 76C3 (515 aa).

Residues 5–25 form a helical membrane-spanning segment; sequence LIQGMSLPLYFLLTLFFFFFA. Cys451 serves as a coordination point for heme.

It belongs to the cytochrome P450 family. Requires heme as cofactor.

The protein resides in the membrane. The sequence is that of Cytochrome P450 76C3 (CYP76C3) from Arabidopsis thaliana (Mouse-ear cress).